Reading from the N-terminus, the 226-residue chain is MRKTKIVVPIMLTELAELEKVSVSDYRTADIVEWRADFLSADEILEMAPKFFEKFKESKILFTLRTVREGGNIQVSEKKYLQILKEILTYNPAYIDVEFFTHGPSFAALKDFRDKMVLSYHNFDEVPSDLTNRLIKMHEEGTAFVKVAVMPERECDVLDLLQITRDMTLEYGDHFISMAMGDLGRLSRISGYLTGSCWTFASLENSSAPGQISLKETEYILDILEK.

Residues 33–35 (EWR) and R65 each bind 3-dehydroquinate. Residue H121 is the Proton donor/acceptor of the active site. The active-site Schiff-base intermediate with substrate is K146. 3-dehydroquinate is bound by residues R188, S207, and Q211.

The protein belongs to the type-I 3-dehydroquinase family. In terms of assembly, homodimer.

The enzyme catalyses 3-dehydroquinate = 3-dehydroshikimate + H2O. It functions in the pathway metabolic intermediate biosynthesis; chorismate biosynthesis; chorismate from D-erythrose 4-phosphate and phosphoenolpyruvate: step 3/7. Its function is as follows. Involved in the third step of the chorismate pathway, which leads to the biosynthesis of aromatic amino acids. Catalyzes the cis-dehydration of 3-dehydroquinate (DHQ) and introduces the first double bond of the aromatic ring to yield 3-dehydroshikimate. This chain is 3-dehydroquinate dehydratase, found in Lactococcus lactis subsp. lactis (strain IL1403) (Streptococcus lactis).